Consider the following 665-residue polypeptide: Transketolase (665 aa).

His26 contacts substrate. Thiamine diphosphate-binding positions include His66 and 114-116; that span reads GPL. Mg(2+) is bound at residue Asp155. 2 residues coordinate thiamine diphosphate: Gly156 and Asn185. Mg(2+)-binding residues include Asn185 and Ile187. His261, Arg358, and Ser385 together coordinate substrate. His261 is a thiamine diphosphate binding site. The Proton donor role is filled by Glu411. Residue Phe437 coordinates thiamine diphosphate. The substrate site is built by His461, Asp469, and Arg520.

The protein belongs to the transketolase family. Homodimer. The cofactor is Mg(2+). It depends on Ca(2+) as a cofactor. Mn(2+) serves as cofactor. Co(2+) is required as a cofactor. Requires thiamine diphosphate as cofactor.

It catalyses the reaction D-sedoheptulose 7-phosphate + D-glyceraldehyde 3-phosphate = aldehydo-D-ribose 5-phosphate + D-xylulose 5-phosphate. Its function is as follows. Catalyzes the transfer of a two-carbon ketol group from a ketose donor to an aldose acceptor, via a covalent intermediate with the cofactor thiamine pyrophosphate. The sequence is that of Transketolase (tkt) from Buchnera aphidicola subsp. Schizaphis graminum (strain Sg).